The primary structure comprises 237 residues: Phosphoribosylaminoimidazole-succinocarboxamide synthase (237 aa).

It belongs to the SAICAR synthetase family.

It carries out the reaction 5-amino-1-(5-phospho-D-ribosyl)imidazole-4-carboxylate + L-aspartate + ATP = (2S)-2-[5-amino-1-(5-phospho-beta-D-ribosyl)imidazole-4-carboxamido]succinate + ADP + phosphate + 2 H(+). It participates in purine metabolism; IMP biosynthesis via de novo pathway; 5-amino-1-(5-phospho-D-ribosyl)imidazole-4-carboxamide from 5-amino-1-(5-phospho-D-ribosyl)imidazole-4-carboxylate: step 1/2. This Psychrobacter cryohalolentis (strain ATCC BAA-1226 / DSM 17306 / VKM B-2378 / K5) protein is Phosphoribosylaminoimidazole-succinocarboxamide synthase.